A 937-amino-acid polypeptide reads, in one-letter code: Calsyntenin-2 (937 aa).

Residues 1–22 (MKMRAITAMLLLVLSGQCGILA) form the signal peptide. Residues 23-818 (GKVNKHKPWI…NSDHISGTPP (796 aa)) lie on the Extracellular side of the membrane. Cadherin domains are found at residues 32–148 (IETS…SPVF) and 149–249 (REPL…KPGW). The N-linked (GlcNAc...) asparagine glycan is linked to Asn86. N-linked (GlcNAc...) asparagine glycans are attached at residues Asn330, Asn365, and Asn716. The helical transmembrane segment at 819–839 (AATVVIVMCIAALVVIVVLGI) threads the bilayer. Residues 840 to 937 (YRIHTTHQDS…LEWDPSTLPY (98 aa)) are Cytoplasmic-facing. The tract at residues 846-937 (HQDSSKEDEE…LEWDPSTLPY (92 aa)) is disordered. Positions 865 to 874 (DNSNLNSIEG) are enriched in polar residues. Acidic residues-rich tracts occupy residues 881 to 900 (VREEEPEEDEDEDEEDDDLA) and 907 to 917 (ESEDSDEDEET).

Belongs to the calsyntenin family. In terms of assembly, homooligomer and heterooligomer; mediates both homophilic and heterophilc interactions with clstn1 and clstn3 paralogs via cadherin domains. By 48 hours post-fertilization (hpf), widely expressed in the brain, with strong expression in the telencephalon and the midbrain.

It is found in the postsynaptic cell membrane. It localises to the endoplasmic reticulum membrane. The protein localises to the golgi apparatus membrane. Its subcellular location is the cell projection. The protein resides in the dendrite. Its function is as follows. Postsynaptic adhesion molecule. Promotes synapse development by acting as a cell adhesion molecule at the postsynaptic membrane, which associates with presynaptic neurexins. This Danio rerio (Zebrafish) protein is Calsyntenin-2 (clstn2a).